We begin with the raw amino-acid sequence, 293 residues long: Cyclohexadienyl dehydrogenase (293 aa).

One can recognise a Prephenate/arogenate dehydrogenase domain in the interval 5–293 (KHIAIIGLGL…ALKTDHDIRP (289 aa)). 6–30 (HIAIIGLGLIGSSAARATKAYCPDV) contacts NAD(+).

It belongs to the prephenate/arogenate dehydrogenase family. As to quaternary structure, homodimer.

It carries out the reaction L-arogenate + NAD(+) = L-tyrosine + CO2 + NADH. The catalysed reaction is prephenate + NAD(+) = 3-(4-hydroxyphenyl)pyruvate + CO2 + NADH. It participates in amino-acid biosynthesis; L-tyrosine biosynthesis; (4-hydroxyphenyl)pyruvate from prephenate (NAD(+) route): step 1/1. Its pathway is amino-acid biosynthesis; L-tyrosine biosynthesis; L-tyrosine from L-arogenate (NAD(+) route): step 1/1. With respect to regulation, insensitive to feedback inhibition by L-tyrosine. Its function is as follows. Can function as either prephenate dehydrogenase or as arogenate dehydrogenase in the biosynthesis of L-tyrosine. Catalyzes two analogous reactions: converts prephenate to 4-hydroxyphenylpyruvate and transforms L-arogenate to L-tyrosine. Is not able to utilize NADP(+) instead of NAD(+) as cosubstrate. The sequence is that of Cyclohexadienyl dehydrogenase from Zymomonas mobilis subsp. mobilis (strain ATCC 31821 / ZM4 / CP4).